The sequence spans 179 residues: Large ribosomal subunit protein uL6 (179 aa).

Belongs to the universal ribosomal protein uL6 family. As to quaternary structure, part of the 50S ribosomal subunit.

This protein binds to the 23S rRNA, and is important in its secondary structure. It is located near the subunit interface in the base of the L7/L12 stalk, and near the tRNA binding site of the peptidyltransferase center. This is Large ribosomal subunit protein uL6 from Bifidobacterium animalis subsp. lactis (strain AD011).